Reading from the N-terminus, the 501-residue chain is Beta-secretase 1 (501 aa).

The N-terminal stretch at 1 to 21 (MAQALPWLLLWMGSGVLPAHG) is a signal peptide. Positions 22-45 (SQPGIRLPLRSGLGGAPLGLRLPR) are excised as a propeptide. Residues 22-457 (SQPGIRLPLR…PQTDESTLMT (436 aa)) are Extracellular-facing. A disordered region spans residues 39–58 (LGLRLPRETDEESEEPGRRG). The region spanning 75 to 416 (YYVEMTLGSP…DRARKRIGFA (342 aa)) is the Peptidase A1 domain. The active site involves D93. Position 126 is an N6-acetyllysine (K126). 3 N-linked (GlcNAc...) asparagine glycosylation sites follow: N153, N172, and N223. Intrachain disulfides connect C216/C420, C278/C443, and C330/C380. N6-acetyllysine is present on residues K275, K279, and K285. D289 is a catalytic residue. An N6-acetyllysine mark is found at K299, K300, and K307. The N-linked (GlcNAc...) asparagine glycan is linked to N354. Residues 458-478 (IAYVMAAICALFMLPLCLMVC) traverse the membrane as a helical segment. Residues C474, C478, C482, and C485 are each lipidated (S-palmitoyl cysteine). Residues 479–501 (QWRCLRCLRHQHDDFADDISLLK) are Cytoplasmic-facing. The interval 479-501 (QWRCLRCLRHQHDDFADDISLLK) is interaction with RTN3. The DXXLL signature appears at 496 to 500 (DISLL). A Phosphoserine modification is found at S498. K501 is covalently cross-linked (Glycyl lysine isopeptide (Lys-Gly) (interchain with G-Cter in ubiquitin)).

Belongs to the peptidase A1 family. As to quaternary structure, monomer. Interacts (via DXXLL motif) with GGA1, GGA2 and GGA3 (via their VHS domain); the interaction highly increases when BACE1 is phosphorylated at Ser-498. Interacts with RTN1; RTN2; RTN3 and RTN4; the interaction leads to inhibition of amyloid precursor protein processing. Interacts with SNX6. Interacts with PCSK9. Interacts with NAT8 and NAT8B. Interacts with BIN1. Interacts (via extracellular domain) with ADAM10 (via extracellular domain). Interacts with SORL1; this interaction may affect binding with APP and hence reduce APP cleavage. Interacts with NRDC AND NRG1. Palmitoylation mediates lipid raft localization. In terms of processing, acetylated in the endoplasmic reticulum at Lys-126, Lys-275, Lys-279, Lys-285, Lys-299, Lys-300 and Lys-307. Acetylation by NAT8 and NAT8B is transient and deacetylation probably occurs in the Golgi. Acetylation regulates the maturation, the transport to the plasma membrane, the stability and the expression of the protein. Post-translationally, ubiquitinated at Lys-501, ubiquitination leads to lysosomal degradation. Monoubiquitinated and 'Lys-63'-linked polyubitinated. Deubiquitnated by USP8; inhibits lysosomal degradation. Phosphorylation at Ser-498 is required for interaction with GGA1 and retrograded transport from endosomal compartments to the trans-Golgi network. Non-phosphorylated BACE1 enters a direct recycling route to the cell surface. In terms of processing, N-Glycosylated. Addition of a bisecting N-acetylglucosamine by MGAT3 blocks lysosomal targeting, further degradation and is required for maintaining stability under stress conditions.

Its subcellular location is the cell membrane. The protein resides in the golgi apparatus. It localises to the trans-Golgi network. It is found in the endoplasmic reticulum. The protein localises to the endosome. Its subcellular location is the cell surface. The protein resides in the cytoplasmic vesicle membrane. It localises to the membrane raft. It is found in the lysosome. The protein localises to the late endosome. Its subcellular location is the early endosome. The protein resides in the recycling endosome. It localises to the cell projection. It is found in the axon. The protein localises to the dendrite. The catalysed reaction is Broad endopeptidase specificity. Cleaves Glu-Val-Asn-Leu-|-Asp-Ala-Glu-Phe in the Swedish variant of Alzheimer's amyloid precursor protein.. Inhibited by RTN3 and RTN4. Responsible for the proteolytic processing of the amyloid precursor protein (APP). Cleaves at the N-terminus of the A-beta peptide sequence, between residues 671 and 672 of APP, leads to the generation and extracellular release of beta-cleaved soluble APP, and a corresponding cell-associated C-terminal fragment which is later released by gamma-secretase. Cleaves CHL1. The protein is Beta-secretase 1 (BACE1) of Bos taurus (Bovine).